The primary structure comprises 126 residues: Large ribosomal subunit protein bL12 (126 aa).

It belongs to the bacterial ribosomal protein bL12 family. As to quaternary structure, homodimer. Part of the ribosomal stalk of the 50S ribosomal subunit. Forms a multimeric L10(L12)X complex, where L10 forms an elongated spine to which 2 to 4 L12 dimers bind in a sequential fashion. Binds GTP-bound translation factors.

Forms part of the ribosomal stalk which helps the ribosome interact with GTP-bound translation factors. Is thus essential for accurate translation. The chain is Large ribosomal subunit protein bL12 from Methylocella silvestris (strain DSM 15510 / CIP 108128 / LMG 27833 / NCIMB 13906 / BL2).